The sequence spans 430 residues: UDP-N-acetylglucosamine 1-carboxyvinyltransferase (430 aa).

22–23 (KN) lines the phosphoenolpyruvate pocket. A UDP-N-acetyl-alpha-D-glucosamine-binding site is contributed by Arg-102. Cys-126 serves as the catalytic Proton donor. Cys-126 is modified (2-(S-cysteinyl)pyruvic acid O-phosphothioketal). Residues 131-135 (RPVDL), 172-175 (KVSV), Asp-317, and Ile-339 contribute to the UDP-N-acetyl-alpha-D-glucosamine site.

The protein belongs to the EPSP synthase family. MurA subfamily.

The protein resides in the cytoplasm. The enzyme catalyses phosphoenolpyruvate + UDP-N-acetyl-alpha-D-glucosamine = UDP-N-acetyl-3-O-(1-carboxyvinyl)-alpha-D-glucosamine + phosphate. It functions in the pathway cell wall biogenesis; peptidoglycan biosynthesis. In terms of biological role, cell wall formation. Adds enolpyruvyl to UDP-N-acetylglucosamine. The chain is UDP-N-acetylglucosamine 1-carboxyvinyltransferase from Agrobacterium fabrum (strain C58 / ATCC 33970) (Agrobacterium tumefaciens (strain C58)).